Consider the following 463-residue polypeptide: Toxin CaTX-A (463 aa).

Positions 1–18 (MSRGYSLHLVLFLVLSTA) are cleaved as a signal peptide.

This sequence belongs to the jellyfish toxin family. Type II subfamily. Oligomer. Post-translationally, contains disulfide bonds. In terms of tissue distribution, it is suggested that CaTX-B is synthesized in the tentacle, is modified (become CaTX-A) and then migrates to the nematocyst.

The protein localises to the secreted. It localises to the nematocyst. It is found in the target cell membrane. In terms of biological role, has potent hemolytic activity. Is lethal to crayfish. Causes cutaneous inflammation in humans. May act as a pore-forming toxin, disrupting normal transmembrane ion concentration gradients in susceptible cells. This chain is Toxin CaTX-A, found in Carybdea alata (Hawaiian box jellyfish).